The following is a 115-amino-acid chain: MSSPSSPFREQSFLCAAGDAGEESRVQVLKNEVRRGSPVLLGWVEQAYADKCVCGPSAPPAPTPPSLSQRVMCNDLFKVNPFQLQQFRADPSTASLLLCPGGLDHKLNLRGKAWG.

Not detectable in normal kidney and liver. Up-regulated in chronic and acute allograft rejection: expressed in the inflammatory infiltrate and in tubular epithelial cells.

It is found in the nucleus. Its function is as follows. Inhibits the cytotoxic effects of TNF-alpha and overexpressed TNF receptor adapters TRADD, FADD, and RIPK1. Involved in TGF-beta1 inhibition of IkappaB-alpha expression and suppression of TNF-mediated IkappaB-alpha degradation. The sequence is that of Putative TGFB1-induced anti-apoptotic factor 1 (MYO18A) from Homo sapiens (Human).